The chain runs to 69 residues: Large ribosomal subunit protein bL28 (69 aa).

This sequence belongs to the bacterial ribosomal protein bL28 family.

The chain is Large ribosomal subunit protein bL28 from Desulfovibrio desulfuricans (strain ATCC 27774 / DSM 6949 / MB).